We begin with the raw amino-acid sequence, 327 residues long: DNA primase large subunit PriL (327 aa).

Residues Cys-218, Cys-290, Cys-299, and Cys-307 each contribute to the [4Fe-4S] cluster site.

The protein belongs to the eukaryotic-type primase large subunit family. In terms of assembly, heterodimer of a small subunit (PriS) and a large subunit (PriL). The cofactor is [4Fe-4S] cluster.

Regulatory subunit of DNA primase, an RNA polymerase that catalyzes the synthesis of short RNA molecules used as primers for DNA polymerase during DNA replication. Stabilizes and modulates the activity of the small subunit, increasing the rate of DNA synthesis, and conferring RNA synthesis capability. The DNA polymerase activity may enable DNA primase to also catalyze primer extension after primer synthesis. May also play a role in DNA repair. This chain is DNA primase large subunit PriL, found in Thermoplasma volcanium (strain ATCC 51530 / DSM 4299 / JCM 9571 / NBRC 15438 / GSS1).